Consider the following 252-residue polypeptide: Carboxy-S-adenosyl-L-methionine synthase (252 aa).

S-adenosyl-L-methionine contacts are provided by residues tyrosine 45, 70 to 72, 95 to 96, 123 to 124, asparagine 138, and arginine 205; these read GCS, DN, and DI.

It belongs to the class I-like SAM-binding methyltransferase superfamily. Cx-SAM synthase family. In terms of assembly, homodimer.

It catalyses the reaction prephenate + S-adenosyl-L-methionine = carboxy-S-adenosyl-L-methionine + 3-phenylpyruvate + H2O. Its function is as follows. Catalyzes the conversion of S-adenosyl-L-methionine (SAM) to carboxy-S-adenosyl-L-methionine (Cx-SAM). The sequence is that of Carboxy-S-adenosyl-L-methionine synthase from Photorhabdus laumondii subsp. laumondii (strain DSM 15139 / CIP 105565 / TT01) (Photorhabdus luminescens subsp. laumondii).